A 405-amino-acid chain; its full sequence is MKILIINTGSSSLKFAIYQYENSKKIISGIVEKIKSQKSIIKIVNTDGSTTERFEKGIENHQKAIEKMFKILTNSDLKILKTLSEIKIIGHRVVHGGSSLKNSVILNNSILNKLKQISELAPLHNPNAITAIEAVLKILPHAKQVLCFDTSWHQTIKEHAFLYAIPYSWYKNHNIRKYGFHGLSYSYITKRSSEILNKKIDSLNLIILHLGNGASINAVKNGKSYDTSMGITPLEGLAMGTRSGDIDPSIINLMSTILNKTTKQIEEILNKESGILGISEKSNDMRDIWNKIEEGEYQSKLAVEIMTYRIKKYIGSYIAALDFNVDAIVFTGGIGVTDYGIRALALKGFEKIGIELDLEKNEMAQSKYLESEISTINSKLKILAIPTNEESTILEDIYNLIPKNL.

Asn-7 contributes to the Mg(2+) binding site. ATP is bound at residue Lys-14. Residue Arg-92 coordinates substrate. The active-site Proton donor/acceptor is the Asp-149. Residues His-209–Gly-213 and Asp-284–Arg-286 contribute to the ATP site. Residue Glu-389 coordinates Mg(2+).

This sequence belongs to the acetokinase family. In terms of assembly, homodimer. Mg(2+) is required as a cofactor. Requires Mn(2+) as cofactor.

The protein localises to the cytoplasm. It carries out the reaction acetate + ATP = acetyl phosphate + ADP. The protein operates within metabolic intermediate biosynthesis; acetyl-CoA biosynthesis; acetyl-CoA from acetate: step 1/2. In terms of biological role, catalyzes the formation of acetyl phosphate from acetate and ATP. Can also catalyze the reverse reaction. In Borreliella burgdorferi (strain ZS7) (Borrelia burgdorferi), this protein is Acetate kinase.